Here is a 143-residue protein sequence, read N- to C-terminus: Transcription antitermination protein NusB (143 aa).

It belongs to the NusB family.

Functionally, involved in transcription antitermination. Required for transcription of ribosomal RNA (rRNA) genes. Binds specifically to the boxA antiterminator sequence of the ribosomal RNA (rrn) operons. The chain is Transcription antitermination protein NusB from Dehalococcoides mccartyi (strain ATCC BAA-2266 / KCTC 15142 / 195) (Dehalococcoides ethenogenes (strain 195)).